We begin with the raw amino-acid sequence, 213 residues long: Ras-like protein rasX (213 aa).

Residue 16–23 participates in GTP binding; that stretch reads GDGGVGKT. The short motif at 38–46 is the Effector region element; that stretch reads YDPTIEDSY. Residues 63 to 67 and 122 to 125 each bind GTP; these read DTAGQ and NKSD. Cysteine methyl ester is present on cysteine 210. A lipid anchor (S-geranylgeranyl cysteine) is attached at cysteine 210. Positions 211–213 are cleaved as a propeptide — removed in mature form; that stretch reads KMM.

Belongs to the small GTPase superfamily. Ras family.

It localises to the cell membrane. The catalysed reaction is GTP + H2O = GDP + phosphate + H(+). Ras proteins bind GDP/GTP and possess intrinsic GTPase activity. This Dictyostelium discoideum (Social amoeba) protein is Ras-like protein rasX (rasX).